Consider the following 299-residue polypeptide: ATP phosphoribosyltransferase (299 aa).

Belongs to the ATP phosphoribosyltransferase family. Long subfamily. As to quaternary structure, equilibrium between an active dimeric form, an inactive hexameric form and higher aggregates. Interconversion between the various forms is largely reversible and is influenced by the natural substrates and inhibitors of the enzyme. It depends on Mg(2+) as a cofactor.

It is found in the cytoplasm. It carries out the reaction 1-(5-phospho-beta-D-ribosyl)-ATP + diphosphate = 5-phospho-alpha-D-ribose 1-diphosphate + ATP. It functions in the pathway amino-acid biosynthesis; L-histidine biosynthesis; L-histidine from 5-phospho-alpha-D-ribose 1-diphosphate: step 1/9. Its activity is regulated as follows. Feedback inhibited by histidine. Functionally, catalyzes the condensation of ATP and 5-phosphoribose 1-diphosphate to form N'-(5'-phosphoribosyl)-ATP (PR-ATP). Has a crucial role in the pathway because the rate of histidine biosynthesis seems to be controlled primarily by regulation of HisG enzymatic activity. This chain is ATP phosphoribosyltransferase, found in Blochmanniella floridana.